Consider the following 291-residue polypeptide: MEHQLFCCEVDTIRRAYQDSNLLNDRVLQTMLKAEENYLPSPNYFKCVQKEIVPKMRKIVATWMLEVCEEQKCEEEVFPLAMNYLDRFLSVEPTKKTRLQLLGATCMFLASKMKETVPLTAEKLCIYTDNSVRPGELLQMELLALNKLKWDLASVTPHDFIEHFLAKLPIHQSSKQILRKHAQTFVALCATDVNFIASPPSMIAAGSVAAAVQGLYLKSTDSCLSSQNLTNFLSQVIRSDPDCLRSCQEQIESLLESSLRQAQQHISTETKRVEEDVDLSCTPTDVRDINI.

Thr-282 carries the phosphothreonine modification.

Belongs to the cyclin family. Cyclin D subfamily. Interacts with the CDK4 and CDK6 protein kinases to form a serine/threonine kinase holoenzyme complex. The cyclin subunit imparts substrate specificity to the complex. In terms of processing, phosphorylation at Thr-282 by MAP kinases is required for ubiquitination and degradation by the DCX(AMBRA1) complex. Ubiquitinated by the DCX(AMBRA1) complex during the transition from G1 to S cell phase, leading to its degradation. The DCX(AMBRA1) complex represents the major regulator of CCND1 stability during the G1/S transition.

It is found in the nucleus. It localises to the cytoplasm. In terms of biological role, regulatory component of the cyclin D1-CDK4 (DC) complex that phosphorylates and inhibits members of the retinoblastoma (RB) protein family including RB1 and regulates the cell-cycle during G(1)/S transition. Phosphorylation of RB1 allows dissociation of the transcription factor E2F from the RB/E2F complex and the subsequent transcription of E2F target genes which are responsible for the progression through the G(1) phase. Hypophosphorylates RB1 in early G(1) phase. Cyclin D-CDK4 complexes are major integrators of various mitogenenic and antimitogenic signals. This Danio rerio (Zebrafish) protein is G1/S-specific cyclin-D1 (ccnd1).